We begin with the raw amino-acid sequence, 76 residues long: MSYIEKLGDNMVKRLKILIDNEFSNLIIEFKRNVKKSFEGEAFVTIGIDENDKISYISIEPLDKDLKEGIKRIKVL.

This is an uncharacterized protein from Sulfolobus islandicus rod-shaped virus 1 (SIRV-1).